Consider the following 356-residue polypeptide: uncharacterized protein (356 aa).

An N-terminal signal peptide occupies residues 1–21 (MHWSRFVGIFLVFSVFSLVNC). Residues 293-317 (RPETDYEGANLPNIPSKKGSANQPV) form a disordered region.

This is an uncharacterized protein from Acanthamoeba polyphaga mimivirus (APMV).